We begin with the raw amino-acid sequence, 509 residues long: Heat shock 70 kDa protein 14 (509 aa).

It belongs to the heat shock protein 70 family. As to quaternary structure, component of ribosome-associated complex (RAC), a heterodimer composed of Hsp70/DnaK-type chaperone HSPA14 and Hsp40/DnaJ-type chaperone DNAJC2.

The protein localises to the cytoplasm. It is found in the cytosol. In terms of biological role, component of the ribosome-associated complex (RAC), a complex involved in folding or maintaining nascent polypeptides in a folding-competent state. In the RAC complex, binds to the nascent polypeptide chain, while DNAJC2 stimulates its ATPase activity. This Homo sapiens (Human) protein is Heat shock 70 kDa protein 14 (HSPA14).